We begin with the raw amino-acid sequence, 256 residues long: Triosephosphate isomerase (256 aa).

Residue 9–11 (NWK) coordinates substrate. Histidine 97 serves as the catalytic Electrophile. The active-site Proton acceptor is the glutamate 169. Substrate contacts are provided by residues glycine 175, serine 214, and 235 to 236 (GG).

The protein belongs to the triosephosphate isomerase family. As to quaternary structure, homodimer.

It is found in the cytoplasm. The catalysed reaction is D-glyceraldehyde 3-phosphate = dihydroxyacetone phosphate. The protein operates within carbohydrate biosynthesis; gluconeogenesis. Its pathway is carbohydrate degradation; glycolysis; D-glyceraldehyde 3-phosphate from glycerone phosphate: step 1/1. Its function is as follows. Involved in the gluconeogenesis. Catalyzes stereospecifically the conversion of dihydroxyacetone phosphate (DHAP) to D-glyceraldehyde-3-phosphate (G3P). The sequence is that of Triosephosphate isomerase from Aliivibrio salmonicida (strain LFI1238) (Vibrio salmonicida (strain LFI1238)).